The primary structure comprises 451 residues: Phosphoglucosamine mutase (451 aa).

The Phosphoserine intermediate role is filled by Ser103. Residues Ser103, Asp243, Asp245, and Asp247 each contribute to the Mg(2+) site. Position 103 is a phosphoserine (Ser103).

It belongs to the phosphohexose mutase family. Mg(2+) is required as a cofactor. In terms of processing, activated by phosphorylation.

It carries out the reaction alpha-D-glucosamine 1-phosphate = D-glucosamine 6-phosphate. In terms of biological role, catalyzes the conversion of glucosamine-6-phosphate to glucosamine-1-phosphate. This is Phosphoglucosamine mutase from Levilactobacillus brevis (strain ATCC 367 / BCRC 12310 / CIP 105137 / JCM 1170 / LMG 11437 / NCIMB 947 / NCTC 947) (Lactobacillus brevis).